Consider the following 1252-residue polypeptide: Nephrin (1252 aa).

The N-terminal stretch at 1-35 is a signal peptide; that stretch reads MGAKRVTVRGARTSPIHRMSSLTPLLLMGMLTSGL. Over 36 to 1078 the chain is Extracellular; the sequence is AESPVPTSAP…PGPPRLPLLP (1043 aa). Ig-like C2-type domains lie at 39–144, 149–247, 256–347, 354–448, 454–554, and 558–649; these read PVPT…VILS, PKVL…ASFT, PPVI…RSIT, PSAI…KSLT, PAQK…TQLV, and PPTN…ETVS. Asn-54 is a glycosylation site (N-linked (GlcNAc...) asparagine). Cystine bridges form between Cys-67/Cys-125, Cys-174/Cys-231, and Cys-279/Cys-331. Asn-370 is a glycosylation site (N-linked (GlcNAc...) asparagine). Cysteines 375 and 431 form a disulfide. Ser-446 carries the phosphoserine modification. Cys-479 and Cys-542 are oxidised to a cystine. Residues Asn-561, Asn-578, Asn-591, and Asn-722 are each glycosylated (N-linked (GlcNAc...) asparagine). Residues Cys-581 and Cys-637 are joined by a disulfide bond. 2 consecutive Ig-like C2-type domains span residues 754–846 and 852–953; these read PTIR…LVRL and PQVD…VSIS. Disulfide bonds link Cys-775–Cys-830 and Cys-877–Cys-934. The Fibronectin type-III domain occupies 957 to 1052; it reads PPLGLKVVSI…IQVSVTTPGP (96 aa). Residues 1043–1067 are disordered; that stretch reads IQVSVTTPGPDQAPEDTDHQLPTEL. Residues 1079-1099 form a helical membrane-spanning segment; sequence VLFAVGGLLLLSNASCVGGLL. Residues 1100-1252 are Cytoplasmic-facing; the sequence is WRRRLRRLAE…LPFELRGHLV (153 aa). Ser-1112 is modified (phosphoserine). The segment covering 1113–1127 has biased composition (basic and acidic residues); that stretch reads EKTEAGSEDRIRNEY. Positions 1113 to 1144 are disordered; that stretch reads EKTEAGSEDRIRNEYEESQWTGDRDTRSSTVS. Thr-1115 is modified (phosphothreonine). Residue Ser-1119 is modified to Phosphoserine. A Phosphotyrosine; by FYN modification is found at Tyr-1204.

This sequence belongs to the immunoglobulin superfamily. In terms of assembly, interacts with NPHS2 and with CD2AP (via C-terminal domain). Self-associates (via the Ig-like domains). Also interacts (via the Ig-like domains) with KIRREL1/NEPH1 and KIRREL2; the interaction with KIRREL1 is dependent on KIRREL1 glycosylation. Interacts with KIRREL3. Interacts with MAGI1 (via PDZ 2 and 3 domains) forming a tripartite complex with IGSF5/JAM4. Interacts with DDN; the interaction is direct. Forms a complex with ACTN4, CASK, IQGAP1, MAGI2, SPTAN1 and SPTBN1. Interacts with phosphatidylinositol 3-kinase regulatory subunit PIK3R1; the interaction is reduced by high glucose levels. Post-translationally, phosphorylated at Tyr-1204 by FYN, leading to the recruitment and activation of phospholipase C-gamma-1/PLCG1. Tyrosine phosphorylation is reduced by high glucose levels. Dephosphorylated by tensin TNS2 which leads to reduced binding of NPHN1 to PIK3R1. In terms of tissue distribution, strongly expressed in the podocytes of kidney glomeruli (at protein level) and at lower levels in the spleen.

The protein localises to the cell membrane. In terms of biological role, seems to play a role in the development or function of the kidney glomerular filtration barrier. Regulates glomerular vascular permeability. May anchor the podocyte slit diaphragm to the actin cytoskeleton. Plays a role in skeletal muscle formation through regulation of myoblast fusion. The sequence is that of Nephrin (Nphs1) from Rattus norvegicus (Rat).